Consider the following 95-residue polypeptide: CRISPR-associated endoribonuclease Cas2 3 (95 aa).

Asp7 lines the Mg(2+) pocket.

This sequence belongs to the CRISPR-associated endoribonuclease Cas2 protein family. Homodimer, forms a heterotetramer with a Cas1 homodimer. Requires Mg(2+) as cofactor.

Its function is as follows. CRISPR (clustered regularly interspaced short palindromic repeat), is an adaptive immune system that provides protection against mobile genetic elements (viruses, transposable elements and conjugative plasmids). CRISPR clusters contain sequences complementary to antecedent mobile elements and target invading nucleic acids. CRISPR clusters are transcribed and processed into CRISPR RNA (crRNA). Functions as a ssRNA-specific endoribonuclease. Involved in the integration of spacer DNA into the CRISPR cassette. The chain is CRISPR-associated endoribonuclease Cas2 3 from Rhodospirillum rubrum (strain ATCC 11170 / ATH 1.1.1 / DSM 467 / LMG 4362 / NCIMB 8255 / S1).